The following is a 592-amino-acid chain: Aspartate--tRNA(Asp/Asn) ligase (592 aa).

An L-aspartate-binding site is contributed by Glu171. The segment at 195 to 198 (QLFK) is aspartate. Arg217 provides a ligand contact to L-aspartate. ATP-binding positions include 217–219 (RDE) and Gln226. Position 447 (His447) interacts with L-aspartate. Glu481 lines the ATP pocket. Residue Arg488 coordinates L-aspartate. Residue 533–536 (GLDR) participates in ATP binding.

This sequence belongs to the class-II aminoacyl-tRNA synthetase family. Type 1 subfamily. Homodimer.

Its subcellular location is the cytoplasm. The catalysed reaction is tRNA(Asx) + L-aspartate + ATP = L-aspartyl-tRNA(Asx) + AMP + diphosphate. Functionally, aspartyl-tRNA synthetase with relaxed tRNA specificity since it is able to aspartylate not only its cognate tRNA(Asp) but also tRNA(Asn). Reaction proceeds in two steps: L-aspartate is first activated by ATP to form Asp-AMP and then transferred to the acceptor end of tRNA(Asp/Asn). The polypeptide is Aspartate--tRNA(Asp/Asn) ligase (Psychromonas ingrahamii (strain DSM 17664 / CCUG 51855 / 37)).